We begin with the raw amino-acid sequence, 563 residues long: Methylcrotonoyl-CoA carboxylase beta chain, mitochondrial (563 aa).

The N-terminal 22 residues, 1–22, are a transit peptide targeting the mitochondrion; that stretch reads MWAVLRLALRPCARASPAGPRA. The CoA carboxyltransferase N-terminal domain maps to 49–306; that stretch reads MKALVNQLHE…QKKLDVTIEP (258 aa). The interval 49 to 555 is carboxyltransferase; sequence MKALVNQLHE…SAALNAPIEK (507 aa). K70 is modified (N6-acetyllysine; alternate). At K70 the chain carries N6-succinyllysine; alternate. Residue K141 is modified to N6-succinyllysine. The CoA carboxyltransferase C-terminal domain maps to 309–555; it reads EPLFPADELY…SAALNAPIEK (247 aa). Residues 343–372 form an acyl-CoA binding region; sequence RFTEFKAFYGDTLVTGFARIFGYPVGIVGN. Position 495 is an N6-acetyllysine; alternate (K495). At K495 the chain carries N6-succinyllysine; alternate. K511 is modified (N6-acetyllysine).

This sequence belongs to the AccD/PCCB family. In terms of assembly, probably a dodecamer composed of six biotin-containing alpha subunits (MCCC1) and six beta (MCCC2) subunits.

It is found in the mitochondrion matrix. The catalysed reaction is 3-methylbut-2-enoyl-CoA + hydrogencarbonate + ATP = 3-methyl-(2E)-glutaconyl-CoA + ADP + phosphate + H(+). It participates in amino-acid degradation; L-leucine degradation; (S)-3-hydroxy-3-methylglutaryl-CoA from 3-isovaleryl-CoA: step 2/3. Its function is as follows. Carboxyltransferase subunit of the 3-methylcrotonyl-CoA carboxylase, an enzyme that catalyzes the conversion of 3-methylcrotonyl-CoA to 3-methylglutaconyl-CoA, a critical step for leucine and isovaleric acid catabolism. This Homo sapiens (Human) protein is Methylcrotonoyl-CoA carboxylase beta chain, mitochondrial (MCCC2).